The primary structure comprises 234 residues: tRNA (guanine-N(1)-)-methyltransferase (234 aa).

Residues glycine 115 and 135 to 140 (VGDYIL) contribute to the S-adenosyl-L-methionine site.

This sequence belongs to the RNA methyltransferase TrmD family. Homodimer.

Its subcellular location is the cytoplasm. It catalyses the reaction guanosine(37) in tRNA + S-adenosyl-L-methionine = N(1)-methylguanosine(37) in tRNA + S-adenosyl-L-homocysteine + H(+). Functionally, specifically methylates guanosine-37 in various tRNAs. The protein is tRNA (guanine-N(1)-)-methyltransferase of Rickettsia typhi (strain ATCC VR-144 / Wilmington).